A 252-amino-acid chain; its full sequence is Vacuolar iron transporter 1 (252 aa).

The Cytoplasmic portion of the chain corresponds to M1–D38. The helical transmembrane segment at V39 to G59 threads the bilayer. Residues A60 to S65 are Vacuolar-facing. Residues L66–G86 form a helical membrane-spanning segment. Over Y87–A170 the chain is Cytoplasmic. The interval S92–I167 is cytoplasmic metal binding domain (MBD). Fe cation is bound by residues E104, E107, E115, E118, M151, and E155. The chain crosses the membrane as a helical span at residues L171–I191. The Vacuolar segment spans residues S192–N196. Residues A197 to G217 traverse the membrane as a helical segment. At R218–P224 the chain is on the cytoplasmic side. The chain crosses the membrane as a helical span at residues F225 to M245. Residues A246–R252 lie on the Vacuolar side of the membrane.

It belongs to the CCC1 family. As to quaternary structure, homodimer. The dimeric interaction is mediated by both the transmembrane domains (TMDs) and the cytoplasmic metal binding domain (MBD). As to expression, highly expressed in leaf blades. Expressed in leaf sheaths.

It localises to the vacuole membrane. The catalysed reaction is Fe(2+)(in) = Fe(2+)(out). In terms of biological role, vacuolar iron transporter involved in the transfer of iron ions from the cytosol to the vacuole for intracellular iron storage. Vacuolar iron storage is required for seed embryo and seedling development. May be involved in the regulation of iron translocation between flag leaves and seeds. Can transport zinc ions from the cytosol to the vacuole. The sequence is that of Vacuolar iron transporter 1 from Oryza sativa subsp. japonica (Rice).